A 447-amino-acid chain; its full sequence is Na(+)-translocating NADH-quinone reductase subunit A (447 aa).

Belongs to the NqrA family. In terms of assembly, composed of six subunits; NqrA, NqrB, NqrC, NqrD, NqrE and NqrF.

It catalyses the reaction a ubiquinone + n Na(+)(in) + NADH + H(+) = a ubiquinol + n Na(+)(out) + NAD(+). Its function is as follows. NQR complex catalyzes the reduction of ubiquinone-1 to ubiquinol by two successive reactions, coupled with the transport of Na(+) ions from the cytoplasm to the periplasm. NqrA to NqrE are probably involved in the second step, the conversion of ubisemiquinone to ubiquinol. This Cellvibrio japonicus (strain Ueda107) (Pseudomonas fluorescens subsp. cellulosa) protein is Na(+)-translocating NADH-quinone reductase subunit A.